A 732-amino-acid chain; its full sequence is Protein kinase YpkA (732 aa).

A Protein kinase domain is found at 136 to 408 (VAETDKFAEG…SNEARLHEFL (273 aa)). Residues 142–150 (FAEGESHIS) and K163 contribute to the ATP site. The active-site Proton acceptor is the D270.

It belongs to the protein kinase superfamily. Ser/Thr protein kinase family.

The protein resides in the secreted. The catalysed reaction is L-seryl-[protein] + ATP = O-phospho-L-seryl-[protein] + ADP + H(+). It catalyses the reaction L-threonyl-[protein] + ATP = O-phospho-L-threonyl-[protein] + ADP + H(+). Functionally, acts as a virulence determinant. The chain is Protein kinase YpkA (ypkA) from Yersinia pestis.